We begin with the raw amino-acid sequence, 372 residues long: Glutamate 5-kinase (372 aa).

Lys14 serves as a coordination point for ATP. Substrate is bound by residues Ser54, Asp141, and Asn153. ATP is bound at residue 173-174 (TD). A PUA domain is found at 280-358 (RGNVTLDEGA…DEIESLLGYI (79 aa)).

It belongs to the glutamate 5-kinase family.

It is found in the cytoplasm. It carries out the reaction L-glutamate + ATP = L-glutamyl 5-phosphate + ADP. It functions in the pathway amino-acid biosynthesis; L-proline biosynthesis; L-glutamate 5-semialdehyde from L-glutamate: step 1/2. Functionally, catalyzes the transfer of a phosphate group to glutamate to form L-glutamate 5-phosphate. This chain is Glutamate 5-kinase, found in Nitrosospira multiformis (strain ATCC 25196 / NCIMB 11849 / C 71).